Here is a 243-residue protein sequence, read N- to C-terminus: Cell division protein ZipA (243 aa).

Topologically, residues 1-4 are periplasmic; that stretch reads MSDV. Residues 5-25 form a helical membrane-spanning segment; it reads TLLRIGIAIVGILFVAAVFFF. Residues 26 to 243 lie on the Cytoplasmic side of the membrane; the sequence is STPKTSAHRV…VPPLIKNSRW (218 aa). The segment at 32–89 is disordered; the sequence is AHRVRTKKEEPPRERREPMLSTEVDNSPHQSVDEVPASVPQQQVNPEATKPGEIELGK. Residues 38–49 show a composition bias toward basic and acidic residues; it reads KKEEPPRERREP.

Belongs to the ZipA family. In terms of assembly, interacts with FtsZ via their C-terminal domains.

It is found in the cell inner membrane. In terms of biological role, essential cell division protein that stabilizes the FtsZ protofilaments by cross-linking them and that serves as a cytoplasmic membrane anchor for the Z ring. Also required for the recruitment to the septal ring of downstream cell division proteins. In Xylella fastidiosa (strain Temecula1 / ATCC 700964), this protein is Cell division protein ZipA.